Here is a 134-residue protein sequence, read N- to C-terminus: Probable RNA-binding protein MJ0652 (134 aa).

Residues 11-108 (RKLTGKMKRM…REGWKKYLAK (98 aa)) enclose the CRM domain.

The sequence is that of Probable RNA-binding protein MJ0652 from Methanocaldococcus jannaschii (strain ATCC 43067 / DSM 2661 / JAL-1 / JCM 10045 / NBRC 100440) (Methanococcus jannaschii).